The chain runs to 39 residues: Photosystem II reaction center protein Psb30 (39 aa).

A helical transmembrane segment spans residues 12–32 (IFQLTFVGLIMVAGPVVIFLL).

This sequence belongs to the Psb30/Ycf12 family. In terms of assembly, PSII is composed of 1 copy each of membrane proteins PsbA, PsbB, PsbC, PsbD, PsbE, PsbF, PsbH, PsbI, PsbJ, PsbK, PsbL, PsbM, PsbT, PsbX, PsbY, PsbZ, Psb30/Ycf12, peripheral proteins PsbO, CyanoQ (PsbQ), PsbU, PsbV and a large number of cofactors. It forms dimeric complexes.

It is found in the cellular thylakoid membrane. Functionally, a core subunit of photosystem II (PSII), probably helps stabilize the reaction center. This Rippkaea orientalis (strain PCC 8801 / RF-1) (Cyanothece sp. (strain PCC 8801)) protein is Photosystem II reaction center protein Psb30.